Here is a 251-residue protein sequence, read N- to C-terminus: Triosephosphate isomerase (251 aa).

9–11 lines the substrate pocket; that stretch reads NWK. H95 functions as the Electrophile in the catalytic mechanism. E167 (proton acceptor) is an active-site residue. Substrate contacts are provided by residues G173, S213, and 234–235; that span reads GG.

This sequence belongs to the triosephosphate isomerase family. Homodimer.

The protein localises to the cytoplasm. It carries out the reaction D-glyceraldehyde 3-phosphate = dihydroxyacetone phosphate. It participates in carbohydrate biosynthesis; gluconeogenesis. Its pathway is carbohydrate degradation; glycolysis; D-glyceraldehyde 3-phosphate from glycerone phosphate: step 1/1. Its function is as follows. Involved in the gluconeogenesis. Catalyzes stereospecifically the conversion of dihydroxyacetone phosphate (DHAP) to D-glyceraldehyde-3-phosphate (G3P). The chain is Triosephosphate isomerase from Citrifermentans bemidjiense (strain ATCC BAA-1014 / DSM 16622 / JCM 12645 / Bem) (Geobacter bemidjiensis).